Reading from the N-terminus, the 302-residue chain is Sulfate adenylyltransferase subunit 2 (302 aa).

It belongs to the PAPS reductase family. CysD subfamily. Heterodimer composed of CysD, the smaller subunit, and CysN.

It catalyses the reaction sulfate + ATP + H(+) = adenosine 5'-phosphosulfate + diphosphate. It participates in sulfur metabolism; hydrogen sulfide biosynthesis; sulfite from sulfate: step 1/3. With CysN forms the ATP sulfurylase (ATPS) that catalyzes the adenylation of sulfate producing adenosine 5'-phosphosulfate (APS) and diphosphate, the first enzymatic step in sulfur assimilation pathway. APS synthesis involves the formation of a high-energy phosphoric-sulfuric acid anhydride bond driven by GTP hydrolysis by CysN coupled to ATP hydrolysis by CysD. This is Sulfate adenylyltransferase subunit 2 from Xanthomonas oryzae pv. oryzae (strain MAFF 311018).